Reading from the N-terminus, the 354-residue chain is Abasic site processing protein HMCES (354 aa).

C2 acts as the Nucleophile in catalysis. A Thiazolidine linkage to a ring-opened DNA abasic site modification is found at C2. The active site involves E127. Residues K148 and K151 each participate in a glycyl lysine isopeptide (Lys-Gly) (interchain with G-Cter in SUMO2) cross-link. S160 is modified (phosphoserine). Residue K276 forms a Glycyl lysine isopeptide (Lys-Gly) (interchain with G-Cter in SUMO2) linkage. The interval 292–354 is disordered; it reads ATKSPKKEDS…EPVAKRPYSQ (63 aa). S295 carries the phosphoserine modification. Over residues 296–309 the composition is skewed to basic and acidic residues; it reads PKKEDSKTPQKEES. A Glycyl lysine isopeptide (Lys-Gly) (interchain with G-Cter in SUMO2) cross-link involves residue K306. A Phosphoserine modification is found at S322. Residues 332–338 carry the PIP-box motif; that stretch reads GLLEQWL. Residues 337–348 show a composition bias toward basic and acidic residues; sequence WLKREKEEEPVA. Glycyl lysine isopeptide (Lys-Gly) (interchain with G-Cter in SUMO2) cross-links involve residues K339 and K342.

Belongs to the SOS response-associated peptidase family. As to quaternary structure, interacts (via PIP-box motif) with PCNA. In terms of processing, ubiquitinated; the covalent HMCES DNA-protein cross-link is ubiquitinated, leading to its degradation by the proteasome.

It localises to the chromosome. With respect to regulation, formation and reversal of DNA-protein cross-link depends on DNA context. Catalyzes formation of the thiazolidine linkage in presence of abasic sites in single-stranded DNA. Mediates the reversal of the thiazolidine cross-link in presence of double stranded DNA. Functionally, sensor of abasic sites in single-stranded DNA (ssDNA) required to preserve genome integrity by promoting error-free repair of abasic sites. Acts as an enzyme that recognizes and binds abasic sites in ssDNA at replication forks and chemically modifies the lesion by forming a covalent cross-link with DNA: forms a stable thiazolidine linkage between a ring-opened abasic site and the alpha-amino and sulfhydryl substituents of its N-terminal catalytic cysteine residue. Promotes error-free repair by protecting abasic sites from translesion synthesis (TLS) polymerases and endonucleases that are error-prone and would generate mutations and double-strand breaks. The HMCES DNA-protein cross-link is then either reversed or degraded. HMCES is able to catalyze the reversal of its thiazolidine cross-link and cycle between a cross-link and a non-cross-linked state depending on DNA context: mediates self-reversal of the thiazolidine cross-link in double stranded DNA, allowing APEX1 to initiate downstream repair of abasic sites. The HMCES DNA-protein cross-link can also be degraded by the SPRTN metalloprotease following unfolding by the BRIP1/FANCJ helicase. Has preference for ssDNA, but can also accommodate double-stranded DNA with 3' or 5' overhang (dsDNA), and dsDNA-ssDNA 3' junction. Plays a protective role during somatic hypermutation of immunoglobulin genes in B-cells: acts via its ability to form covalent cross-links with abasic sites, thereby limiting the accumulation of deletions in somatic hypermutation target regions. Also involved in class switch recombination (CSR) in B-cells independently of the formation of a DNA-protein cross-link: acts by binding and protecting ssDNA overhangs to promote DNA double-strand break repair through the microhomology-mediated alternative-end-joining (Alt-EJ) pathway. Acts as a protease: mediates autocatalytic processing of its N-terminal methionine in order to expose the catalytic cysteine. The chain is Abasic site processing protein HMCES from Pongo abelii (Sumatran orangutan).